Here is a 1391-residue protein sequence, read N- to C-terminus: DNA-directed RNA polymerase subunit beta (1391 aa).

The protein belongs to the RNA polymerase beta chain family. As to quaternary structure, the RNAP catalytic core consists of 2 alpha, 1 beta, 1 beta' and 1 omega subunit. When a sigma factor is associated with the core the holoenzyme is formed, which can initiate transcription.

It catalyses the reaction RNA(n) + a ribonucleoside 5'-triphosphate = RNA(n+1) + diphosphate. Its function is as follows. DNA-dependent RNA polymerase catalyzes the transcription of DNA into RNA using the four ribonucleoside triphosphates as substrates. The sequence is that of DNA-directed RNA polymerase subunit beta from Granulibacter bethesdensis (strain ATCC BAA-1260 / CGDNIH1).